A 119-amino-acid chain; its full sequence is NAD(P)H-quinone oxidoreductase subunit M (119 aa).

This sequence belongs to the complex I NdhM subunit family. In terms of assembly, NDH-1 can be composed of about 15 different subunits; different subcomplexes with different compositions have been identified which probably have different functions.

The protein localises to the cellular thylakoid membrane. The enzyme catalyses a plastoquinone + NADH + (n+1) H(+)(in) = a plastoquinol + NAD(+) + n H(+)(out). The catalysed reaction is a plastoquinone + NADPH + (n+1) H(+)(in) = a plastoquinol + NADP(+) + n H(+)(out). Its function is as follows. NDH-1 shuttles electrons from an unknown electron donor, via FMN and iron-sulfur (Fe-S) centers, to quinones in the respiratory and/or the photosynthetic chain. The immediate electron acceptor for the enzyme in this species is believed to be plastoquinone. Couples the redox reaction to proton translocation, and thus conserves the redox energy in a proton gradient. Cyanobacterial NDH-1 also plays a role in inorganic carbon-concentration. The polypeptide is NAD(P)H-quinone oxidoreductase subunit M (Gloeothece citriformis (strain PCC 7424) (Cyanothece sp. (strain PCC 7424))).